A 198-amino-acid polypeptide reads, in one-letter code: PEP-dependent dihydroxyacetone kinase 1, ADP-binding subunit DhaL (198 aa).

Positions 6–194 (DWALRWLNDF…SALLFHAMLQ (189 aa)) constitute a DhaL domain. The Mg(2+) site is built by D30, D35, and D37. Residues 38–41 (HGIN), 79–80 (AS), G120, M129, R166, and 179–181 (DPG) contribute to the ADP site.

As to quaternary structure, homodimer. The dihydroxyacetone kinase complex is composed of a homodimer of DhaM, a homodimer of DhaK and the subunit DhaL. It depends on Mg(2+) as a cofactor.

Its subcellular location is the cytoplasm. The enzyme catalyses dihydroxyacetone + phosphoenolpyruvate = dihydroxyacetone phosphate + pyruvate. The protein operates within polyol metabolism; glycerol degradation. In terms of biological role, ADP-binding subunit of the dihydroxyacetone kinase, which is responsible for the phosphoenolpyruvate (PEP)-dependent phosphorylation of dihydroxyacetone. DhaL-ADP is converted to DhaL-ATP via a phosphoryl group transfer from DhaM and transmits it to dihydroxyacetone binds to DhaK. In Listeria innocua serovar 6a (strain ATCC BAA-680 / CLIP 11262), this protein is PEP-dependent dihydroxyacetone kinase 1, ADP-binding subunit DhaL.